Consider the following 373-residue polypeptide: Arfaptin-1 (373 aa).

The segment at 1–47 is disordered; it reads MAQESPKNSAAEIPVTSNGEVDDAHEHGYNRDLKHSLPSGLGLSETQ. Position 2 is an N-acetylalanine (A2). S5 bears the Phosphoserine mark. The segment covering 22 to 35 has biased composition (basic and acidic residues); sequence DDAHEHGYNRDLKH. S36, S39, S69, S79, and S132 each carry phosphoserine. The AH domain maps to 153 to 353; the sequence is TVDLELEAQI…NQKQLELTLK (201 aa). Position 361 is a phosphothreonine (T361).

In terms of assembly, forms homodimers or heterodimers with ARFIP2. Interacts with non-myristoylated GTP-bound ARF3, but not to GDP-bound ARF3. Interacts with ARF1. Binds with lower affinity to ARF5 and with very little affinity to ARF6. Interacts with ARL1. Interacts with ATG9A. In terms of processing, phosphorylated by PRKD1; phosphorylation delocalizes ARFIP1 from the Golgi and disrupts its ability to inhibit the activity of ADP-ribosylation factor, an important component of the vesicle scission machinery.

Its subcellular location is the golgi apparatus. The protein localises to the trans-Golgi network membrane. Its function is as follows. Plays a role in controlling biogenesis of secretory granules at the trans-Golgi network. Mechanistically, binds ARF-GTP at the neck of a growing secretory granule precursor and forms a protective scaffold. Once the granule precursor has been completely loaded, active PRKD1 phosphorylates ARFIP1 and releases it from ARFs. In turn, ARFs induce fission. Through this mechanism, ensures proper secretory granule formation at the Golgi of pancreatic beta cells. The protein is Arfaptin-1 of Mus musculus (Mouse).